The primary structure comprises 63 residues: Large ribosomal subunit protein bL28 (63 aa).

Belongs to the bacterial ribosomal protein bL28 family.

The chain is Large ribosomal subunit protein bL28 from Coprothermobacter proteolyticus (strain ATCC 35245 / DSM 5265 / OCM 4 / BT).